Consider the following 509-residue polypeptide: Glycerol kinase (509 aa).

T12 lines the ADP pocket. Residues T12, T13, and S14 each contribute to the ATP site. T12 lines the sn-glycerol 3-phosphate pocket. R16 contacts ADP. R82, E83, Y134, and D245 together coordinate sn-glycerol 3-phosphate. Residues R82, E83, Y134, D245, and Q246 each coordinate glycerol. ADP is bound by residues T267 and G311. Residues T267, G311, Q315, and G412 each contribute to the ATP site. ADP contacts are provided by G412 and N416.

Belongs to the FGGY kinase family.

The enzyme catalyses glycerol + ATP = sn-glycerol 3-phosphate + ADP + H(+). Its pathway is polyol metabolism; glycerol degradation via glycerol kinase pathway; sn-glycerol 3-phosphate from glycerol: step 1/1. Its activity is regulated as follows. Inhibited by fructose 1,6-bisphosphate (FBP). Its function is as follows. Key enzyme in the regulation of glycerol uptake and metabolism. Catalyzes the phosphorylation of glycerol to yield sn-glycerol 3-phosphate. The chain is Glycerol kinase from Rhizorhabdus wittichii (strain DSM 6014 / CCUG 31198 / JCM 15750 / NBRC 105917 / EY 4224 / RW1) (Sphingomonas wittichii).